We begin with the raw amino-acid sequence, 352 residues long: Phosphoribosylformylglycinamidine cyclo-ligase (352 aa).

This sequence belongs to the AIR synthase family.

The protein localises to the cytoplasm. It carries out the reaction 2-formamido-N(1)-(5-O-phospho-beta-D-ribosyl)acetamidine + ATP = 5-amino-1-(5-phospho-beta-D-ribosyl)imidazole + ADP + phosphate + H(+). Its pathway is purine metabolism; IMP biosynthesis via de novo pathway; 5-amino-1-(5-phospho-D-ribosyl)imidazole from N(2)-formyl-N(1)-(5-phospho-D-ribosyl)glycinamide: step 2/2. This chain is Phosphoribosylformylglycinamidine cyclo-ligase, found in Pseudomonas putida (strain W619).